A 92-amino-acid polypeptide reads, in one-letter code: DNA-directed RNA polymerase subunit omega (92 aa).

The protein belongs to the RNA polymerase subunit omega family. In terms of assembly, the RNAP catalytic core consists of 2 alpha, 1 beta, 1 beta' and 1 omega subunit. When a sigma factor is associated with the core the holoenzyme is formed, which can initiate transcription.

The enzyme catalyses RNA(n) + a ribonucleoside 5'-triphosphate = RNA(n+1) + diphosphate. Functionally, promotes RNA polymerase assembly. Latches the N- and C-terminal regions of the beta' subunit thereby facilitating its interaction with the beta and alpha subunits. The chain is DNA-directed RNA polymerase subunit omega from Shewanella oneidensis (strain ATCC 700550 / JCM 31522 / CIP 106686 / LMG 19005 / NCIMB 14063 / MR-1).